A 570-amino-acid polypeptide reads, in one-letter code: Proline--tRNA ligase (570 aa).

This sequence belongs to the class-II aminoacyl-tRNA synthetase family. ProS type 1 subfamily. Homodimer.

The protein localises to the cytoplasm. It catalyses the reaction tRNA(Pro) + L-proline + ATP = L-prolyl-tRNA(Pro) + AMP + diphosphate. Its function is as follows. Catalyzes the attachment of proline to tRNA(Pro) in a two-step reaction: proline is first activated by ATP to form Pro-AMP and then transferred to the acceptor end of tRNA(Pro). As ProRS can inadvertently accommodate and process non-cognate amino acids such as alanine and cysteine, to avoid such errors it has two additional distinct editing activities against alanine. One activity is designated as 'pretransfer' editing and involves the tRNA(Pro)-independent hydrolysis of activated Ala-AMP. The other activity is designated 'posttransfer' editing and involves deacylation of mischarged Ala-tRNA(Pro). The misacylated Cys-tRNA(Pro) is not edited by ProRS. This is Proline--tRNA ligase from Thermoanaerobacter sp. (strain X514).